The sequence spans 209 residues: ATP-dependent dethiobiotin synthetase BioD (209 aa).

Position 13–18 (13–18 (DIGKTV)) interacts with ATP. A Mg(2+)-binding site is contributed by T17. Residue K33 is part of the active site. Mg(2+) contacts are provided by R47 and E100. ATP is bound by residues 100-103 (EGAG) and 184-186 (PRL).

Belongs to the dethiobiotin synthetase family. Homodimer. Mg(2+) is required as a cofactor.

The protein localises to the cytoplasm. It catalyses the reaction (7R,8S)-7,8-diammoniononanoate + CO2 + ATP = (4R,5S)-dethiobiotin + ADP + phosphate + 3 H(+). The protein operates within cofactor biosynthesis; biotin biosynthesis; biotin from 7,8-diaminononanoate: step 1/2. In terms of biological role, catalyzes a mechanistically unusual reaction, the ATP-dependent insertion of CO2 between the N7 and N8 nitrogen atoms of 7,8-diaminopelargonic acid (DAPA, also called 7,8-diammoniononanoate) to form a ureido ring. This Rhodopseudomonas palustris (strain BisB18) protein is ATP-dependent dethiobiotin synthetase BioD.